The primary structure comprises 91 residues: uncharacterized protein (91 aa).

The first 21 residues, 1-21 (MKQLLASPSLQLVTYPASATA), serve as a signal peptide directing secretion.

Belongs to the BhsA/McbA family.

The protein resides in the periplasm. This is an uncharacterized protein from Escherichia coli O157:H7.